The following is a 350-amino-acid chain: Protein-glutamate methylesterase/protein-glutamine glutaminase 2 (350 aa).

Residues 3 to 121 (RVLLVDDSPV…DPDYEEAVSE (119 aa)) form the Response regulatory domain. Residue D54 is modified to 4-aspartylphosphate. Positions 158-322 (IHQDIRVIVI…SFVYGMPGAA (165 aa)) constitute a CheB-type methylesterase domain. Catalysis depends on residues S170, H197, and D290.

This sequence belongs to the CheB family. In terms of processing, phosphorylated by CheA. Phosphorylation of the N-terminal regulatory domain activates the methylesterase activity.

The protein localises to the cytoplasm. It catalyses the reaction [protein]-L-glutamate 5-O-methyl ester + H2O = L-glutamyl-[protein] + methanol + H(+). The catalysed reaction is L-glutaminyl-[protein] + H2O = L-glutamyl-[protein] + NH4(+). In terms of biological role, involved in chemotaxis. Part of a chemotaxis signal transduction system that modulates chemotaxis in response to various stimuli. Catalyzes the demethylation of specific methylglutamate residues introduced into the chemoreceptors (methyl-accepting chemotaxis proteins or MCP) by CheR. Also mediates the irreversible deamidation of specific glutamine residues to glutamic acid. This is Protein-glutamate methylesterase/protein-glutamine glutaminase 2 from Methanospirillum hungatei JF-1 (strain ATCC 27890 / DSM 864 / NBRC 100397 / JF-1).